The primary structure comprises 337 residues: Secreted effector protein EspF(U) (337 aa).

Tandem repeats lie at residues 96 to 142 (IKPA…AEHG), 143 to 189 (IQPA…AEHG), 190 to 236 (IQPA…AEHG), 237 to 283 (IQPA…AEHG), and 284 to 330 (IQPA…AEHG). The 5 X 48 AA approximate tandem repeats stretch occupies residues 96–330 (IKPARSMAEH…RLMQHLAEHG (235 aa)). The segment at 291–312 (AEHIPPAPNWPAPTPPVQNEQS) is disordered. Positions 295 to 306 (PPAPNWPAPTPP) are enriched in pro residues.

The protein belongs to the EspF(U)/TccP family. In terms of assembly, interacts with host BAIAP2 and host WASL/N-WASP. Can also interact with host proteins BAIAP2L1 and WAS/WASP.

The protein localises to the secreted. It is found in the host cytoplasm. Required for efficient pedestal formation in host epithelial cells during infection. Acts as an intermediate between Tir (via host BAIAP2) and host WASL/N-WASP. Directly binds and activates WASL/N-WASP, which stimulates actin polymerization and leads to the formation of actin pedestals at the sites of bacterial adhesion. This Escherichia coli O157:H7 protein is Secreted effector protein EspF(U) (espF(U)).